The sequence spans 61 residues: Short neurotoxin 1 (61 aa).

4 cysteine pairs are disulfide-bonded: C3–C23, C17–C40, C42–C53, and C54–C59.

It belongs to the three-finger toxin family. Short-chain subfamily. Type I alpha-neurotoxin sub-subfamily. In terms of tissue distribution, expressed by the venom gland.

The protein resides in the secreted. Its function is as follows. Binds to muscle nicotinic acetylcholine receptor (nAChR) and inhibit acetylcholine from binding to the receptor, thereby impairing neuromuscular transmission. The chain is Short neurotoxin 1 from Naja annulata annulata (Banded water cobra).